The sequence spans 197 residues: Small ribosomal subunit protein uS2 (197 aa).

Belongs to the universal ribosomal protein uS2 family.

This Archaeoglobus fulgidus (strain ATCC 49558 / DSM 4304 / JCM 9628 / NBRC 100126 / VC-16) protein is Small ribosomal subunit protein uS2 (rps2).